Here is a 161-residue protein sequence, read N- to C-terminus: uncharacterized protein (161 aa).

The or 21 signal peptide spans 1–23 (MKKFAFLTALFAACYLPNAYAHA). The helical transmembrane segment at 129 to 149 (IYLHDILGGIGYIVGIAGLIA) threads the bilayer.

Its subcellular location is the membrane. This is an uncharacterized protein from Haemophilus influenzae (strain ATCC 51907 / DSM 11121 / KW20 / Rd).